A 147-amino-acid chain; its full sequence is Shadow of prion protein (147 aa).

A signal peptide spans methionine 1 to alanine 24. Positions glycine 26–arginine 43 are enriched in gly residues. Positions glycine 26–alanine 45 are disordered. N-linked (GlcNAc...) asparagine glycosylation is present at asparagine 107. A lipid anchor (GPI-anchor amidated glycine) is attached at glycine 122. Positions serine 123–proline 147 are cleaved as a propeptide — removed in mature form.

It belongs to the SPRN family. Post-translationally, N-glycosylated. As to expression, mainly expressed in brain (at protein level). In brain, it is highly expressed in the hippocampus and cerebellum and is also expressed at lower level in other areas of the brain including the cerebral cortex, the thalamus and the medulla. In hippocampus and cerebellum it is highly expressed in the cell bodies of pyramidal cells and Purkinje cells, respectively.

It localises to the cell membrane. Prion-like protein that has PrP(C)-like neuroprotective activity. May act as a modulator for the biological actions of normal and abnormal PrP. The protein is Shadow of prion protein (Sprn) of Mus musculus (Mouse).